The chain runs to 506 residues: Bifunctional purine biosynthesis protein PurH (506 aa).

An MGS-like domain is found at 1 to 146 (MARLALLSVS…KNFAHLTVLC (146 aa)).

It belongs to the PurH family.

The enzyme catalyses (6R)-10-formyltetrahydrofolate + 5-amino-1-(5-phospho-beta-D-ribosyl)imidazole-4-carboxamide = 5-formamido-1-(5-phospho-D-ribosyl)imidazole-4-carboxamide + (6S)-5,6,7,8-tetrahydrofolate. It catalyses the reaction IMP + H2O = 5-formamido-1-(5-phospho-D-ribosyl)imidazole-4-carboxamide. The protein operates within purine metabolism; IMP biosynthesis via de novo pathway; 5-formamido-1-(5-phospho-D-ribosyl)imidazole-4-carboxamide from 5-amino-1-(5-phospho-D-ribosyl)imidazole-4-carboxamide (10-formyl THF route): step 1/1. Its pathway is purine metabolism; IMP biosynthesis via de novo pathway; IMP from 5-formamido-1-(5-phospho-D-ribosyl)imidazole-4-carboxamide: step 1/1. This is Bifunctional purine biosynthesis protein PurH from Trichormus variabilis (strain ATCC 29413 / PCC 7937) (Anabaena variabilis).